Consider the following 448-residue polypeptide: Leukocyte immunoglobulin-like receptor subfamily B member 4 (448 aa).

The signal sequence occupies residues methionine 1 to methionine 21. Topologically, residues glutamine 22 to glutamate 259 are extracellular. Ig-like C2-type domains are found at residues proline 27–threonine 118 and proline 124–serine 218. 2 disulfides stabilise this stretch: cysteine 49–cysteine 98 and cysteine 144–cysteine 195. A disordered region spans residues valine 217–serine 248. A helical membrane pass occupies residues valine 260–leucine 280. The Cytoplasmic portion of the chain corresponds to glutamine 281 to histidine 448. The segment at aspartate 297 to histidine 448 is disordered. The residue at position 319 (serine 319) is a Phosphoserine. The segment covering methionine 344–aspartate 354 has biased composition (basic and acidic residues). The ITIM motif 1 motif lies at valine 358–valine 363. Basic and acidic residues predominate over residues leucine 384 to aspartate 398. 2 short sequence motifs (ITIM motif) span residues valine 410–leucine 415 and serine 440–leucine 445.

As to quaternary structure, interacts with PTPN6. Detected on monocytes, macrophages, dendritic cells, natural killer cells and B-cells (at protein level). Expressed in the lung.

The protein localises to the cell membrane. In terms of biological role, inhibitory receptor involved in the down-regulation of the immune response and the development of immune tolerance. Receptor for FN1. Receptor for apolipoprotein APOE. Receptor for ALCAM/CD166. Inhibits receptor-mediated phosphorylation of cellular proteins and mobilization of intracellular calcium ions. Inhibits FCGR1A/CD64-mediated monocyte activation by inducing phosphatase-mediated down-regulation of the phosphorylation of multiple proteins including LCK, SYK, LAT and ERK, leading to a reduction in TNF production. This inhibition of monocyte activation occurs at least in part via binding to FN1. Inhibits T cell proliferation, inducing anergy, suppressing the differentiation of IFNG-producing CD8+ cytotoxic T cells and enhancing the generation of CD8+ T suppressor cells. Induces up-regulation of CD86 on dendritic cells. Interferes with TNFRSF5-signaling and NF-kappa-B up-regulation. The sequence is that of Leukocyte immunoglobulin-like receptor subfamily B member 4 (LILRB4) from Homo sapiens (Human).